Reading from the N-terminus, the 342-residue chain is uncharacterized protein (342 aa).

Transmembrane regions (helical) follow at residues Y35–S55, L134–F154, and L161–S180. Disordered stretches follow at residues S198–N220 and I311–N342.

Its subcellular location is the membrane. This is an uncharacterized protein from Dictyostelium discoideum (Social amoeba).